Consider the following 148-residue polypeptide: Large ribosomal subunit protein bL9 (148 aa).

Belongs to the bacterial ribosomal protein bL9 family.

In terms of biological role, binds to the 23S rRNA. This chain is Large ribosomal subunit protein bL9, found in Parafrankia sp. (strain EAN1pec).